Reading from the N-terminus, the 321-residue chain is Translation initiation factor eIF2B subunit alpha (321 aa).

The protein belongs to the eIF-2B alpha/beta/delta subunits family. Component of the translation initiation factor 2B (eIF2B) complex which is a heterodecamer of two sets of five different subunits: alpha, beta, gamma, delta and epsilon. Subunits alpha, beta and delta comprise a regulatory subcomplex and subunits epsilon and gamma comprise a catalytic subcomplex. Within the complex, the hexameric regulatory complex resides at the center, with the two heterodimeric catalytic subcomplexes bound on opposite sides.

It localises to the cytoplasm. The protein localises to the cytosol. In terms of biological role, acts as a component of the translation initiation factor 2B (eIF2B) complex, which catalyzes the exchange of GDP for GTP on eukaryotic initiation factor 2 (eIF2) gamma subunit. Its guanine nucleotide exchange factor activity is repressed when bound to eIF2 complex phosphorylated on the alpha subunit, thereby limiting the amount of methionyl-initiator methionine tRNA available to the ribosome and consequently global translation is repressed. The protein is Translation initiation factor eIF2B subunit alpha (eif2b1) of Dictyostelium discoideum (Social amoeba).